The following is a 161-amino-acid chain: Regulator of ribonuclease activity A (161 aa).

This sequence belongs to the RraA family. In terms of assembly, homotrimer. Binds to both RNA-binding sites in the C-terminal region of Rne and to RhlB.

Its subcellular location is the cytoplasm. Functionally, globally modulates RNA abundance by binding to RNase E (Rne) and regulating its endonucleolytic activity. Can modulate Rne action in a substrate-dependent manner by altering the composition of the degradosome. Modulates RNA-binding and helicase activities of the degradosome. The chain is Regulator of ribonuclease activity A from Photobacterium profundum (strain SS9).